A 313-amino-acid chain; its full sequence is Foldase protein PrsA (313 aa).

Positions 1 to 20 (MKKKLLAGAITLLSVATLAA) are cleaved as a signal peptide. A lipid anchor (N-palmitoyl cysteine) is attached at Cys-21. Residue Cys-21 is the site of S-diacylglycerol cysteine attachment. The 99-residue stretch at 143–241 (TPDVTAQIIR…SQYYIVKLTK (99 aa)) folds into the PpiC domain.

This sequence belongs to the PrsA family.

The protein localises to the cell membrane. It carries out the reaction [protein]-peptidylproline (omega=180) = [protein]-peptidylproline (omega=0). Functionally, plays a major role in protein secretion by helping the post-translocational extracellular folding of several secreted proteins. This chain is Foldase protein PrsA, found in Streptococcus pneumoniae serotype 4 (strain ATCC BAA-334 / TIGR4).